The chain runs to 280 residues: Large ribosomal subunit protein uL2 (280 aa).

Disordered regions lie at residues 29–58 and 225–280; these read PEKS…GGGH and VMNP…NKKR. Residues 45–58 show a composition bias toward basic residues; that stretch reads SHGHITTRHRGGGH. Residues 253-269 show a composition bias toward basic and acidic residues; the sequence is KEGRTRKPKRYSDDMIV. A compositionally biased stretch (basic residues) spans 270-280; it reads RRRRANKNKKR.

It belongs to the universal ribosomal protein uL2 family. In terms of assembly, part of the 50S ribosomal subunit. Forms a bridge to the 30S subunit in the 70S ribosome.

Its function is as follows. One of the primary rRNA binding proteins. Required for association of the 30S and 50S subunits to form the 70S ribosome, for tRNA binding and peptide bond formation. It has been suggested to have peptidyltransferase activity; this is somewhat controversial. Makes several contacts with the 16S rRNA in the 70S ribosome. This chain is Large ribosomal subunit protein uL2, found in Corynebacterium glutamicum (strain R).